A 1437-amino-acid chain; its full sequence is uncharacterized protein (1437 aa).

Positions 1-25 (MRRGCRHHLAAVVLLIATFPPLAYN) are cleaved as a signal peptide. The Extracellular segment spans residues 26–1326 (QNIGGINQNI…SRIKENYFKW (1301 aa)). 7 N-linked (GlcNAc...) asparagine glycosylation sites follow: Asn-103, Asn-315, Asn-364, Asn-492, Asn-605, Asn-676, and Asn-914. The NIDO domain maps to 193 to 356 (AFFGQQASQA…GRYMFRVDDV (164 aa)). In terms of domain architecture, AMOP spans 648 to 829 (VKEKSREMCH…FRCQMFYWRR (182 aa)). The helical transmembrane segment at 1327–1347 (LAVIAGIVGIIIVILLIFLVF) threads the bilayer. The Cytoplasmic segment spans residues 1348-1437 (WCIKRKKLQE…QGMLGLNTSV (90 aa)). Residues 1394–1419 (PRTVAMPPPRGTTATPMTLEPRGFSP) are disordered.

The protein localises to the membrane. This is an uncharacterized protein from Caenorhabditis elegans.